The following is a 459-amino-acid chain: Sulfide:quinone oxidoreductase, mitochondrial (459 aa).

Residues 1-24 (MLTLNSTIKSVTGSFQSASMLARF) constitute a mitochondrion transit peptide. 35 to 39 (GGGSA) serves as a coordination point for FAD. Residues Cys-204 and Cys-383 each act as cysteine persulfide intermediate in the active site.

Belongs to the SQRD family. FAD serves as cofactor.

It is found in the mitochondrion. Its function is as follows. Catalyzes the oxidation of hydrogen sulfide, with the help of a quinone. This Schizosaccharomyces pombe (strain 972 / ATCC 24843) (Fission yeast) protein is Sulfide:quinone oxidoreductase, mitochondrial (hmt2).